The primary structure comprises 65 residues: Transcriptional regulatory protein SenS (65 aa).

The H-T-H motif DNA-binding region spans 11–31; sequence RFRKRKTYGNQILPLELLIEK.

The protein to B.natto SenN.

Its function is as follows. Regulates the expression of extracellular-protein genes of Bacillus subtilis. This chain is Transcriptional regulatory protein SenS (senS), found in Bacillus subtilis (strain 168).